A 253-amino-acid chain; its full sequence is MAASGESGTSGGGGSTEEAFMTFYSEVKQIEKRDSVLTSKNQIERLTRPGSSYFNLNPFEVLQIDPEVTDEEIKKRFRQLSILVHPDKNQDDADRAQKAFEAVDKAYKLLLDQEQKKRALDVIQAGKEYVEHTVKERKKQLKKEGKPTIVEEDDPELFKQAVYKQTMKLFAELEIKRKEREAKEMHERKRQREEEIEAQEKAKREREWQKNFEESRDGRVDSWRNFQANTKGKKEKKNRTFLRPPKVKMEQRE.

Ala-2 is modified (N-acetylalanine). At Ser-35 the chain carries Phosphoserine. In terms of domain architecture, J spans 57-124 (NPFEVLQIDP…QKKRALDVIQ (68 aa)). Lys-146 bears the N6-acetyllysine mark. Basic and acidic residues predominate over residues 181–222 (EAKEMHERKRQREEEIEAQEKAKREREWQKNFEESRDGRVDS). Residues 181–253 (EAKEMHERKR…PPKVKMEQRE (73 aa)) form a disordered region. 2 consecutive short sequence motifs (nuclear localization signal) follow at residues 189 to 192 (KRQR) and 203 to 206 (KRER). Ser-222 bears the Phosphoserine mark. The segment covering 231–240 (KGKKEKKNRT) has biased composition (basic residues). The segment at 232–253 (GKKEKKNRTFLRPPKVKMEQRE) is essential for polyglutamine aggregation suppression.

As to quaternary structure, interacts with SRPK1. Interacts with HSP70 (HSPA1A or HSPA1B). As to expression, ubiquitous.

Its subcellular location is the nucleus. Its function is as follows. Suppresses polyglutamine (polyQ) aggregation of ATXN3 in neuronal cells. This is DnaJ homolog subfamily C member 8 (DNAJC8) from Homo sapiens (Human).